A 509-amino-acid polypeptide reads, in one-letter code: Hyaluronidase PH-20 (509 aa).

The first 35 residues, 1–35 (MGVLKFKHIFFRSFVKSSGVSQIVFTFLLIPCCLT), serve as a signal peptide directing secretion. Disulfide bonds link Cys60–Cys351 and Cys224–Cys238. Asn82 carries an N-linked (GlcNAc...) asparagine glycan. Glu148 functions as the Proton donor in the catalytic mechanism. N-linked (GlcNAc...) asparagine glycosylation is found at Asn166, Asn235, Asn254, and Asn368. 3 disulfides stabilise this stretch: Cys376/Cys387, Cys381/Cys435, and Cys437/Cys464. Asn393 carries N-linked (GlcNAc...) asparagine glycosylation. Ser490 carries GPI-anchor amidated serine lipidation. The propeptide at 491 to 509 (ATMFIVSILFLIISSVASL) is removed in mature form.

The protein belongs to the glycosyl hydrolase 56 family. In terms of processing, N-glycosylated. Testis.

The protein resides in the cell membrane. The enzyme catalyses Random hydrolysis of (1-&gt;4)-linkages between N-acetyl-beta-D-glucosamine and D-glucuronate residues in hyaluronate.. Its function is as follows. Involved in sperm-egg adhesion. Upon fertilization sperm must first penetrate a layer of cumulus cells that surrounds the egg before reaching the zona pellucida. The cumulus cells are embedded in a matrix containing hyaluronic acid which is formed prior to ovulation. This protein aids in penetrating the layer of cumulus cells by digesting hyaluronic acid. The polypeptide is Hyaluronidase PH-20 (SPAM1) (Homo sapiens (Human)).